Here is a 1340-residue protein sequence, read N- to C-terminus: Serine/threonine-protein phosphatase 7 long form homolog (1340 aa).

Aspartate 660 and histidine 662 together coordinate Mn(2+). The active-site Proton donor is the histidine 722. Position 773 (histidine 773) interacts with Mn(2+). Disordered regions lie at residues 788–814 (QERN…DRSE), 1012–1093 (KSMD…SRTR), 1196–1218 (TDGA…SEDI), and 1266–1340 (FTNL…DMDS). A compositionally biased stretch (basic residues) spans 790-799 (RNRKRKRTQK). The span at 1018–1027 (EQMEVDEKDD) shows a compositional bias: acidic residues. A compositionally biased stretch (basic and acidic residues) spans 1049–1080 (GDRDMVDFSDKTENGSKEADHSETAEISKDLS). Polar residues predominate over residues 1203–1213 (EPSTSKLNYSE). 2 stretches are compositionally biased toward basic and acidic residues: residues 1266 to 1289 (FTNL…ERVI) and 1318 to 1328 (DSVDSKNKGSL).

Belongs to the PPP phosphatase family. PP-7 subfamily. The cofactor is Mn(2+). As to expression, expressed in root tips, the shoot apical meristem (SAM), leaf vasculature, hydathodes and mature flowers.

Its subcellular location is the nucleus. The enzyme catalyses O-phospho-L-seryl-[protein] + H2O = L-seryl-[protein] + phosphate. It carries out the reaction O-phospho-L-threonyl-[protein] + H2O = L-threonyl-[protein] + phosphate. In terms of biological role, maybe required to maintain cell division activity in meristematic cells. This is Serine/threonine-protein phosphatase 7 long form homolog from Arabidopsis thaliana (Mouse-ear cress).